Here is a 505-residue protein sequence, read N- to C-terminus: Cell division control protein 6 homolog B (505 aa).

The tract at residues 37–72 (KRKMRSDSAAVSGNSVSTPKKLKSHLPSSVPNPGMS) is disordered. The segment covering 45–54 (AAVSGNSVST) has biased composition (polar residues).

This sequence belongs to the CDC6/cdc18 family.

The protein localises to the nucleus. May be involved in the initiation of DNA replication. This is Cell division control protein 6 homolog B from Arabidopsis thaliana (Mouse-ear cress).